The chain runs to 387 residues: Eukaryotic translation initiation factor 3 subunit M (387 aa).

In terms of domain architecture, PCI spans 181–340 (LSSKVMIELL…RKVHISSTMH (160 aa)).

This sequence belongs to the eIF-3 subunit M family. In terms of assembly, component of the eukaryotic translation initiation factor 3 (eIF-3) complex. The eIF-3 complex interacts with pix.

The protein resides in the cytoplasm. It is found in the golgi apparatus. Its function is as follows. Component of the eukaryotic translation initiation factor 3 (eIF-3) complex, which is involved in protein synthesis of a specialized repertoire of mRNAs and, together with other initiation factors, stimulates binding of mRNA and methionyl-tRNAi to the 40S ribosome. The eIF-3 complex specifically targets and initiates translation of a subset of mRNAs involved in cell proliferation. The chain is Eukaryotic translation initiation factor 3 subunit M from Drosophila mojavensis (Fruit fly).